A 290-amino-acid chain; its full sequence is Ribosomal RNA small subunit methyltransferase A (290 aa).

S-adenosyl-L-methionine contacts are provided by Asn-27, Leu-29, Gly-54, Glu-75, Asp-100, and Asn-125.

The protein belongs to the class I-like SAM-binding methyltransferase superfamily. rRNA adenine N(6)-methyltransferase family. RsmA subfamily.

The protein resides in the cytoplasm. It carries out the reaction adenosine(1518)/adenosine(1519) in 16S rRNA + 4 S-adenosyl-L-methionine = N(6)-dimethyladenosine(1518)/N(6)-dimethyladenosine(1519) in 16S rRNA + 4 S-adenosyl-L-homocysteine + 4 H(+). In terms of biological role, specifically dimethylates two adjacent adenosines (A1518 and A1519) in the loop of a conserved hairpin near the 3'-end of 16S rRNA in the 30S particle. May play a critical role in biogenesis of 30S subunits. This is Ribosomal RNA small subunit methyltransferase A from Streptococcus thermophilus (strain ATCC BAA-250 / LMG 18311).